We begin with the raw amino-acid sequence, 261 residues long: tRNA pseudouridine synthase A (261 aa).

D51 (nucleophile) is an active-site residue. Y109 serves as a coordination point for substrate.

It belongs to the tRNA pseudouridine synthase TruA family. In terms of assembly, homodimer.

It catalyses the reaction uridine(38/39/40) in tRNA = pseudouridine(38/39/40) in tRNA. In terms of biological role, formation of pseudouridine at positions 38, 39 and 40 in the anticodon stem and loop of transfer RNAs. This is tRNA pseudouridine synthase A from Haemophilus ducreyi (strain 35000HP / ATCC 700724).